The chain runs to 377 residues: Short chain dehydrogenase gsfE (377 aa).

Residues Asp89, Gln121, Tyr226, Ala266, and Ser268 each coordinate NADP(+). Tyr226 (proton donor) is an active-site residue.

The protein belongs to the short-chain dehydrogenases/reductases (SDR) family. Highly divergent.

It carries out the reaction dehydrogriseofulvin + NADPH + H(+) = griseofulvin + NADP(+). It participates in secondary metabolite biosynthesis; terpenoid biosynthesis. In terms of biological role, short chain dehydrogenase; part of the gene cluster that mediates the biosynthesis of griseofulvin, an important antifungal drug that has been in use for a long time for treating dermatophyte infections. The first step of the pathway is the formation of the heptaketide backbone by gsfA which is initiated by priming with acetyl-CoA, followed by sequential condensations of 6 malonyl-CoA units. The resulting benzophenone can undergo a spontaneous dehydration to form norlichexanthone. However, the true precursor for the griseofulvin biosynthesis is not norlichexanthone, but the heptaketide benzophenone that is O-methylated at 3-OH by gsfB to produce griseophenone D which is further methylated at 9-OH by gsfC to yield griseophenone C. Griseophenone C is then substrate of halogenase gsfI which is responsible for the regio-specific chlorination at the C13 position to form griseophenone B. The cytochrome P450 gsfF catalyzes the coupling of orcinol and phloroglucinol rings in griseophenone B to form desmethyl-dehydrogriseofulvin A which is further methylated at 5-OH by gsfD to yield dehydrogriseofulvin. Finally, gsfE performs stereospecific reduction of enone 18 of dehydrogriseofulvin to afford the final product griseofulvin. The polypeptide is Short chain dehydrogenase gsfE (Penicillium aethiopicum).